A 494-amino-acid chain; its full sequence is Ketol-acid reductoisomerase (NADP(+)) (494 aa).

The region spanning 14-208 is the KARI N-terminal Rossmann domain; that stretch reads LDQLGRCRFM…GGHRAGCLES (195 aa). Residues 45–48, R68, R76, S78, and 108–110 each bind NADP(+); these read CGAQ and DKQ. Residue H132 is part of the active site. G158 provides a ligand contact to NADP(+). KARI C-terminal knotted domains follow at residues 209-344 and 345-487; these read SFVA…NYPE and SDVE…MSDM. 4 residues coordinate Mg(2+): D217, E221, E389, and E393. Position 414 (S414) interacts with substrate.

Belongs to the ketol-acid reductoisomerase family. Mg(2+) serves as cofactor.

It catalyses the reaction (2R)-2,3-dihydroxy-3-methylbutanoate + NADP(+) = (2S)-2-acetolactate + NADPH + H(+). The catalysed reaction is (2R,3R)-2,3-dihydroxy-3-methylpentanoate + NADP(+) = (S)-2-ethyl-2-hydroxy-3-oxobutanoate + NADPH + H(+). Its pathway is amino-acid biosynthesis; L-isoleucine biosynthesis; L-isoleucine from 2-oxobutanoate: step 2/4. The protein operates within amino-acid biosynthesis; L-valine biosynthesis; L-valine from pyruvate: step 2/4. Its function is as follows. Involved in the biosynthesis of branched-chain amino acids (BCAA). Catalyzes an alkyl-migration followed by a ketol-acid reduction of (S)-2-acetolactate (S2AL) to yield (R)-2,3-dihydroxy-isovalerate. In the isomerase reaction, S2AL is rearranged via a Mg-dependent methyl migration to produce 3-hydroxy-3-methyl-2-ketobutyrate (HMKB). In the reductase reaction, this 2-ketoacid undergoes a metal-dependent reduction by NADPH to yield (R)-2,3-dihydroxy-isovalerate. This chain is Ketol-acid reductoisomerase (NADP(+)), found in Aliivibrio fischeri (strain ATCC 700601 / ES114) (Vibrio fischeri).